The following is a 46-amino-acid chain: HIAHHTLPCKCPICGKPFAPWLLQGHIRTHTGESPSVCQHCNRAFA.

3 C2H2-type zinc fingers span residues 1 to 4 (HIAH), 9 to 30 (CKCPICGKPFAPWLLQGHIRTH), and 36 to 46 (SVCQHCNRAFA).

It belongs to the snail C2H2-type zinc-finger protein family.

It localises to the nucleus. This Lithobius forficatus (Centipede) protein is Escargot/snail protein homolog.